A 424-amino-acid polypeptide reads, in one-letter code: 2,3-bisphosphoglycerate-independent phosphoglycerate mutase (424 aa).

It belongs to the BPG-independent phosphoglycerate mutase family. A-PGAM subfamily.

The catalysed reaction is (2R)-2-phosphoglycerate = (2R)-3-phosphoglycerate. It participates in carbohydrate degradation; glycolysis; pyruvate from D-glyceraldehyde 3-phosphate: step 3/5. Functionally, catalyzes the interconversion of 2-phosphoglycerate and 3-phosphoglycerate. This is 2,3-bisphosphoglycerate-independent phosphoglycerate mutase from Aeropyrum pernix (strain ATCC 700893 / DSM 11879 / JCM 9820 / NBRC 100138 / K1).